The primary structure comprises 144 residues: Transcription antitermination protein NusB (144 aa).

This sequence belongs to the NusB family.

Involved in transcription antitermination. Required for transcription of ribosomal RNA (rRNA) genes. Binds specifically to the boxA antiterminator sequence of the ribosomal RNA (rrn) operons. The polypeptide is Transcription antitermination protein NusB (Leifsonia xyli subsp. xyli (strain CTCB07)).